Consider the following 476-residue polypeptide: Aspartyl/glutamyl-tRNA(Asn/Gln) amidotransferase subunit B (476 aa).

This sequence belongs to the GatB/GatE family. GatB subfamily. Heterotrimer of A, B and C subunits.

It carries out the reaction L-glutamyl-tRNA(Gln) + L-glutamine + ATP + H2O = L-glutaminyl-tRNA(Gln) + L-glutamate + ADP + phosphate + H(+). It catalyses the reaction L-aspartyl-tRNA(Asn) + L-glutamine + ATP + H2O = L-asparaginyl-tRNA(Asn) + L-glutamate + ADP + phosphate + 2 H(+). In terms of biological role, allows the formation of correctly charged Asn-tRNA(Asn) or Gln-tRNA(Gln) through the transamidation of misacylated Asp-tRNA(Asn) or Glu-tRNA(Gln) in organisms which lack either or both of asparaginyl-tRNA or glutaminyl-tRNA synthetases. The reaction takes place in the presence of glutamine and ATP through an activated phospho-Asp-tRNA(Asn) or phospho-Glu-tRNA(Gln). The protein is Aspartyl/glutamyl-tRNA(Asn/Gln) amidotransferase subunit B of Listeria innocua serovar 6a (strain ATCC BAA-680 / CLIP 11262).